The following is a 610-amino-acid chain: DNA mismatch repair protein MutL (610 aa).

Residues 351–406 (GQRPQAPWSAETSPSRPYQPAPAFSERPQASFDGLSTPTARAEPQFSPDPVSPGLA) are disordered.

The protein belongs to the DNA mismatch repair MutL/HexB family.

Its function is as follows. This protein is involved in the repair of mismatches in DNA. It is required for dam-dependent methyl-directed DNA mismatch repair. May act as a 'molecular matchmaker', a protein that promotes the formation of a stable complex between two or more DNA-binding proteins in an ATP-dependent manner without itself being part of a final effector complex. The sequence is that of DNA mismatch repair protein MutL from Rhizobium etli (strain ATCC 51251 / DSM 11541 / JCM 21823 / NBRC 15573 / CFN 42).